Consider the following 100-residue polypeptide: Urease subunit gamma (100 aa).

The protein belongs to the urease gamma subunit family. In terms of assembly, heterotrimer of UreA (gamma), UreB (beta) and UreC (alpha) subunits. Three heterotrimers associate to form the active enzyme.

The protein localises to the cytoplasm. It catalyses the reaction urea + 2 H2O + H(+) = hydrogencarbonate + 2 NH4(+). The protein operates within nitrogen metabolism; urea degradation; CO(2) and NH(3) from urea (urease route): step 1/1. The polypeptide is Urease subunit gamma (Pseudomonas putida (strain ATCC 700007 / DSM 6899 / JCM 31910 / BCRC 17059 / LMG 24140 / F1)).